Here is a 291-residue protein sequence, read N- to C-terminus: MSWFESLVLGLVQGLTEFLPVSSSAHLRLTAAFSGWHDPGAAFTAITQIGTEAAVLIYFRKDIGRIIAAWTRSLTDKSMRHDPDARMGWLVIVGSIPIGVLGLTLKDQIEGPFRDLRITATMLIVVGVIIGIADRMAARDEKGGRHRAPQQRKELENLGVRDGLIYGLCQAAALIPGVSRSGATISGGLFMGYRREAAARYSFLLAIPAVLASGVFELKDAMESDHVSWGPTLFATVIAFATGYVVIAWFMKFISTKSFMPFVWYRIALGIVIIVLVSVGVLSPHAAESGG.

Transmembrane regions (helical) follow at residues 39–59, 85–105, 118–138, 198–218, 231–251, and 262–282; these read PGAAFTAITQIGTEAAVLIYF, ARMGWLVIVGSIPIGVLGLTL, ITATMLIVVGVIIGIADRMAA, AARYSFLLAIPAVLASGVFEL, PTLFATVIAFATGYVVIAWFM, and FVWYRIALGIVIIVLVSVGVL.

Belongs to the UppP family.

Its subcellular location is the cell membrane. It catalyses the reaction di-trans,octa-cis-undecaprenyl diphosphate + H2O = di-trans,octa-cis-undecaprenyl phosphate + phosphate + H(+). Its function is as follows. Catalyzes the dephosphorylation of undecaprenyl diphosphate (UPP). Confers resistance to bacitracin. This chain is Undecaprenyl-diphosphatase 2, found in Streptomyces coelicolor (strain ATCC BAA-471 / A3(2) / M145).